Here is a 253-residue protein sequence, read N- to C-terminus: Ribosome-inactivating protein saporin-9 (253 aa).

The active site involves glutamate 176.

The catalysed reaction is Endohydrolysis of the N-glycosidic bond at one specific adenosine on the 28S rRNA.. Ribosome-inactivating protein of type 1, inhibits protein synthesis in animal cells. The protein is Ribosome-inactivating protein saporin-9 (SAP9) of Saponaria officinalis (Common soapwort).